Consider the following 128-residue polypeptide: Large ribosomal subunit protein eL22 (128 aa).

This sequence belongs to the eukaryotic ribosomal protein eL22 family. Component of the large ribosomal subunit.

It localises to the cytoplasm. In terms of biological role, component of the large ribosomal subunit. The ribosome is a large ribonucleoprotein complex responsible for the synthesis of proteins in the cell. The polypeptide is Large ribosomal subunit protein eL22 (rpl22) (Ictalurus punctatus (Channel catfish)).